A 66-amino-acid polypeptide reads, in one-letter code: Large ribosomal subunit protein bL33c (66 aa).

Belongs to the bacterial ribosomal protein bL33 family.

It localises to the plastid. The protein resides in the chloroplast. The sequence is that of Large ribosomal subunit protein bL33c from Jasminum nudiflorum (Winter jasmine).